The chain runs to 260 residues: Acetylglutamate kinase (260 aa).

Residues 45-46 (GG), Arg67, and Asn159 each bind substrate.

The protein belongs to the acetylglutamate kinase family. ArgB subfamily.

Its subcellular location is the cytoplasm. It catalyses the reaction N-acetyl-L-glutamate + ATP = N-acetyl-L-glutamyl 5-phosphate + ADP. The protein operates within amino-acid biosynthesis; L-arginine biosynthesis; N(2)-acetyl-L-ornithine from L-glutamate: step 2/4. Catalyzes the ATP-dependent phosphorylation of N-acetyl-L-glutamate. The sequence is that of Acetylglutamate kinase from Colwellia psychrerythraea (strain 34H / ATCC BAA-681) (Vibrio psychroerythus).